The following is a 612-amino-acid chain: Threonine--tRNA ligase (612 aa).

A catalytic region spans residues 218–509 (DHRKLGVELG…LSEHFGGNFP (292 aa)). Residues Cys-310, His-361, and His-486 each contribute to the Zn(2+) site.

It belongs to the class-II aminoacyl-tRNA synthetase family. In terms of assembly, homodimer. Zn(2+) is required as a cofactor.

The protein resides in the cytoplasm. It catalyses the reaction tRNA(Thr) + L-threonine + ATP = L-threonyl-tRNA(Thr) + AMP + diphosphate + H(+). Functionally, catalyzes the attachment of threonine to tRNA(Thr) in a two-step reaction: L-threonine is first activated by ATP to form Thr-AMP and then transferred to the acceptor end of tRNA(Thr). Also edits incorrectly charged L-seryl-tRNA(Thr). This Helicobacter pylori (strain P12) protein is Threonine--tRNA ligase.